Here is a 471-residue protein sequence, read N- to C-terminus: Glutamate--tRNA ligase (471 aa).

The short motif at 9-19 (PSPTGYLHVGG) is the 'HIGH' region element. Positions 98, 100, 125, and 127 each coordinate Zn(2+). A 'KMSKS' region motif is present at residues 237 to 241 (KLSKR). Lys240 contributes to the ATP binding site.

It belongs to the class-I aminoacyl-tRNA synthetase family. Glutamate--tRNA ligase type 1 subfamily. In terms of assembly, monomer. It depends on Zn(2+) as a cofactor.

It is found in the cytoplasm. The enzyme catalyses tRNA(Glu) + L-glutamate + ATP = L-glutamyl-tRNA(Glu) + AMP + diphosphate. In terms of biological role, catalyzes the attachment of glutamate to tRNA(Glu) in a two-step reaction: glutamate is first activated by ATP to form Glu-AMP and then transferred to the acceptor end of tRNA(Glu). This is Glutamate--tRNA ligase from Shigella sonnei (strain Ss046).